A 182-amino-acid polypeptide reads, in one-letter code: Putative manganese efflux pump MntP (182 aa).

The next 6 helical transmembrane spans lie at 6–26, 37–57, 71–91, 101–121, 131–151, and 162–182; these read LIPL…VSLG, ILYI…IGMV, HFAG…STIL, IGIS…SVGL, IITI…GLLI, and YGEI…LFPI.

This sequence belongs to the MntP (TC 9.B.29) family.

The protein resides in the cell membrane. Its function is as follows. Probably functions as a manganese efflux pump. The polypeptide is Putative manganese efflux pump MntP (Bacillus cereus (strain G9842)).